Here is a 67-residue protein sequence, read N- to C-terminus: Probable Sec-independent protein translocase protein TatE (67 aa).

The helical transmembrane segment at 4–21 (ISITKLLVVAALVVLLFG) threads the bilayer.

The protein belongs to the TatA/E family. TatE subfamily.

The protein localises to the cell inner membrane. Functionally, part of the twin-arginine translocation (Tat) system that transports large folded proteins containing a characteristic twin-arginine motif in their signal peptide across membranes. TatE shares overlapping functions with TatA. In Enterobacter cloacae subsp. cloacae (strain ATCC 13047 / DSM 30054 / NBRC 13535 / NCTC 10005 / WDCM 00083 / NCDC 279-56), this protein is Probable Sec-independent protein translocase protein TatE.